We begin with the raw amino-acid sequence, 896 residues long: Protein translocase subunit SecA (896 aa).

Residues Gln-87, 105-109 (GEGKT), and Asp-507 contribute to the ATP site. The interval 853–879 (ESLSENDEASETQTFRRQEKKIGRNDP) is disordered. Positions 866 to 876 (TFRRQEKKIGR) are enriched in basic and acidic residues. Residues Cys-880, Cys-882, Cys-891, and His-892 each coordinate Zn(2+).

Belongs to the SecA family. Monomer and homodimer. Part of the essential Sec protein translocation apparatus which comprises SecA, SecYEG and auxiliary proteins SecDF-YajC and YidC. Requires Zn(2+) as cofactor.

It is found in the cell inner membrane. The protein resides in the cytoplasm. It catalyses the reaction ATP + H2O + cellular proteinSide 1 = ADP + phosphate + cellular proteinSide 2.. In terms of biological role, part of the Sec protein translocase complex. Interacts with the SecYEG preprotein conducting channel. Has a central role in coupling the hydrolysis of ATP to the transfer of proteins into and across the cell membrane, serving both as a receptor for the preprotein-SecB complex and as an ATP-driven molecular motor driving the stepwise translocation of polypeptide chains across the membrane. In Legionella pneumophila subsp. pneumophila (strain Philadelphia 1 / ATCC 33152 / DSM 7513), this protein is Protein translocase subunit SecA.